The chain runs to 1265 residues: Shugoshin 2 (1265 aa).

The stretch at 69–116 (KENSRRITTEKMLLQKEVEKLNFENTFLRLKLNNLNKKLIDIEALMNN) forms a coiled coil. 4 disordered regions span residues 161-202 (LTSN…STQD), 230-287 (DVPP…NLSA), 305-339 (LNCN…SARE), and 381-447 (GIKK…GAED). Over residues 190–202 (SSGSTTQPLSTQD) the composition is skewed to polar residues. Over residues 232-242 (PPRESHSHSDQ) the composition is skewed to basic and acidic residues. Polar residues predominate over residues 305–322 (LNCNNEINGHTNETNTEM). Basic and acidic residues-rich tracts occupy residues 389–410 (KTNE…EKKR) and 425–446 (IGEK…RGAE). A coiled-coil region spans residues 452 to 476 (FNNEQLAQMNEQLAQVNELKKMTLQ). The disordered stretch occupies residues 499-526 (EQEETYSLSQSSGKFHQESKFDKGQNSL). The segment covering 503–512 (TYSLSQSSGK) has biased composition (polar residues). A coiled-coil region spans residues 603 to 626 (EQNESNINKLRKKVNRKTEIISGM). A compositionally biased stretch (basic residues) spans 1073 to 1083 (NKMTSKSKKRK). The disordered stretch occupies residues 1073–1093 (NKMTSKSKKRKTSIDPSPESH). Residue S1144 is modified to Phosphoserine. Residues 1200–1265 (KVNRRTQKSG…EPSLRDKMRR (66 aa)) are disordered. A compositionally biased stretch (polar residues) spans 1217-1230 (DLSNTSFVSNNTAE). A compositionally biased stretch (basic and acidic residues) spans 1231-1243 (SENKSEDLSSERT).

Belongs to the shugoshin family. Part of an astrin (SPAG5) -kinastrin (SKAP) complex containing KNSTRN, SPAG5, PLK1, DYNLL1 and SGO2. Interacts with CDCA8. Directly interacts with PPP2CA.

It localises to the nucleus. Its subcellular location is the chromosome. The protein localises to the centromere. It is found in the kinetochore. Cooperates with PPP2CA to protect centromeric cohesin from separase-mediated cleavage in oocytes specifically during meiosis I. Has a crucial role in protecting REC8 at centromeres from cleavage by separase. During meiosis, protects centromeric cohesion complexes until metaphase II/anaphase II transition, preventing premature release of meiosis-specific REC8 cohesin complexes from anaphase I centromeres. Is thus essential for an accurate gametogenesis. May act by targeting PPP2CA to centromeres, thus leading to cohesin dephosphorylation. Essential for recruiting KIF2C to the inner centromere and for correcting defective kinetochore attachments. Involved in centromeric enrichment of AUKRB in prometaphase. This chain is Shugoshin 2, found in Homo sapiens (Human).